Reading from the N-terminus, the 212-residue chain is MKLDVIKLDGGKGGSIELPDDIFGIEEIRADILQRCVTWQLAKRRAGTHKIQVRNEVSRTGKKMYKQKGTGGARHGSRRAAQFVGGAKAHGPVVRSHAFDLPKKVRALALRHALSSKAKDGSLIVLDSATLTEAKTAALRASFEKIGVTNALVIAGAQVDNNLKLAARNIPNVDVLPNAGLNVYDVLRRRTLVLTKDAVAAIQARFQPEEAA.

The protein belongs to the universal ribosomal protein uL4 family. As to quaternary structure, part of the 50S ribosomal subunit.

One of the primary rRNA binding proteins, this protein initially binds near the 5'-end of the 23S rRNA. It is important during the early stages of 50S assembly. It makes multiple contacts with different domains of the 23S rRNA in the assembled 50S subunit and ribosome. In terms of biological role, forms part of the polypeptide exit tunnel. This chain is Large ribosomal subunit protein uL4, found in Phenylobacterium zucineum (strain HLK1).